A 558-amino-acid polypeptide reads, in one-letter code: Glutamine--tRNA ligase (558 aa).

Positions 36–46 (PEPNGYLHIGH) match the 'HIGH' region motif. Residues 37–39 (EPN) and 43–49 (HIGHAKS) each bind ATP. 2 residues coordinate L-glutamine: D69 and Y214. ATP contacts are provided by residues T233, 263 to 264 (RL), and 271 to 273 (LSK). The 'KMSKS' region motif lies at 270-274 (LLSKR).

Belongs to the class-I aminoacyl-tRNA synthetase family. As to quaternary structure, monomer.

It is found in the cytoplasm. The catalysed reaction is tRNA(Gln) + L-glutamine + ATP = L-glutaminyl-tRNA(Gln) + AMP + diphosphate. This is Glutamine--tRNA ligase from Bradyrhizobium diazoefficiens (strain JCM 10833 / BCRC 13528 / IAM 13628 / NBRC 14792 / USDA 110).